We begin with the raw amino-acid sequence, 515 residues long: RNA exonuclease NGL2 (515 aa).

2 disordered regions span residues 1-54 and 353-381; these read MTQD…SKPI and RDGEEGADDEEGGNIEKYGKDQPESPVPE. Over residues 21 to 34 the composition is skewed to basic and acidic residues; the sequence is EINKSVKDAKHQTN. Residues 40-52 are compositionally biased toward basic residues; it reads QHKKKGKKGKKSK. Residues 369-381 are compositionally biased toward basic and acidic residues; that stretch reads KYGKDQPESPVPE.

Belongs to the CCR4/nocturin family.

It localises to the cytoplasm. It is found in the nucleus. Functionally, involved in pre-rRNA processing. Required for the final stage of 3'-end maturation of 5.8S rRNA at site E. The chain is RNA exonuclease NGL2 (NGL2) from Saccharomyces cerevisiae (strain ATCC 204508 / S288c) (Baker's yeast).